The chain runs to 710 residues: Early transcription factor 82 kDa subunit (710 aa).

It belongs to the poxviridae VETF large subunit family. In terms of assembly, heterodimer of a 70 kDa and a 82 kDa subunit. Part of the early transcription complex composed of ETF, RAP94/OPG109, and the DNA-directed RNA polymerase.

It is found in the virion. Acts with RNA polymerase to initiate transcription from early gene promoters. Is recruited by the RPO-associated protein of 94 kDa RAP94/OPG109 to form the early transcription complex, which also contains the core RNA polymerase. ETF heterodimer binds to early gene promoters. In Homo sapiens (Human), this protein is Early transcription factor 82 kDa subunit (OPG133).